A 550-amino-acid polypeptide reads, in one-letter code: Carnitine transporter (550 aa).

Helical transmembrane passes span 15-35 (FLAV…AIYS), 53-73 (FTTP…GLAF), 92-112 (SWIF…WGFL), 137-157 (VAYS…LASI), 196-216 (MFLL…AVTF), 230-250 (FMTK…SSYV), 263-283 (VCLG…TQFI), 317-337 (WTVF…LFVT), 347-367 (EVIF…FGVF), 401-421 (LLPA…VFLA), 451-471 (LFWC…KAPL), and 477-497 (ATIV…YGLV).

Belongs to the BCCT transporter (TC 2.A.15) family.

It is found in the cell inner membrane. Inhibited by the protonophore 3,3',4',5-tetrachlorosalicylanilide (TCS). Not activated by osmolarity. Its function is as follows. Catalyzes the energy-dependent uptake of carnitine and is essential for growth on carnitine. Can also mediate the uptake of choline. Is probably a proton:substrate symporter. The protein is Carnitine transporter of Acinetobacter baumannii (strain ATCC 19606 / DSM 30007 / JCM 6841 / CCUG 19606 / CIP 70.34 / NBRC 109757 / NCIMB 12457 / NCTC 12156 / 81).